The chain runs to 382 residues: V-type proton ATPase subunit C 1 (382 aa).

Thr-2 carries the post-translational modification N-acetylthreonine.

It belongs to the V-ATPase C subunit family. As to quaternary structure, V-ATPase is a heteromultimeric enzyme made up of two complexes: the ATP-hydrolytic V1 complex and the proton translocation V0 complex. The V1 complex consists of three catalytic AB heterodimers that form a heterohexamer, three peripheral stalks each consisting of EG heterodimers, one central rotor including subunits D and F, and the regulatory subunits C and H. The proton translocation complex V0 consists of the proton transport subunit a, a ring of proteolipid subunits c9c'', rotary subunit d, subunits e and f, and the accessory subunits ATP6AP1/Ac45 and ATP6AP2/PRR.

It is found in the cytoplasmic vesicle. Its subcellular location is the secretory vesicle. The protein localises to the synaptic vesicle membrane. It localises to the clathrin-coated vesicle membrane. Functionally, subunit of the V1 complex of vacuolar(H+)-ATPase (V-ATPase), a multisubunit enzyme composed of a peripheral complex (V1) that hydrolyzes ATP and a membrane integral complex (V0) that translocates protons. V-ATPase is responsible for acidifying and maintaining the pH of intracellular compartments and in some cell types, is targeted to the plasma membrane, where it is responsible for acidifying the extracellular environment. Subunit C is necessary for the assembly of the catalytic sector of the enzyme and is likely to have a specific function in its catalytic activity. The protein is V-type proton ATPase subunit C 1 (ATP6V1C1) of Macaca fascicularis (Crab-eating macaque).